A 210-amino-acid polypeptide reads, in one-letter code: MSFILTFWMIFLMDSIIVLISFSIFLSVWICALIIATVLTVTKINNIYCTWDFISSKFIDTYWFVLGMMFILCLLLRLCLLLYFSCINFVSFDLCKVIGFQWYWVYFLFGETTIFSNLILESDYLIGDLRILQCNHVLTLLSLVIYKLWVSAVDVIHSFTISSLGIKVDCIPGRCNEIILFATNNATLYGQCSELCGVLHGFMPIVINFI.

Over 1–15 (MSFILTFWMIFLMDS) the chain is Mitochondrial intermembrane. Residues 16–36 (IIVLISFSIFLSVWICALIIA) form a helical membrane-spanning segment. Over 37 to 63 (TVLTVTKINNIYCTWDFISSKFIDTYW) the chain is Mitochondrial matrix. A helical transmembrane segment spans residues 64–84 (FVLGMMFILCLLLRLCLLLYF). At 85-210 (SCINFVSFDL…GFMPIVINFI (126 aa)) the chain is on the mitochondrial intermembrane side. Cu cation-binding residues include His157, Cys192, Glu194, Cys196, His200, and Met203. Glu194 is a Mg(2+) binding site.

Belongs to the cytochrome c oxidase subunit 2 family. In terms of assembly, component of the cytochrome c oxidase (complex IV, CIV), a multisubunit enzyme composed of a catalytic core of 3 subunits and several supernumerary subunits. The complex exists as a monomer or a dimer and forms supercomplexes (SCs) in the inner mitochondrial membrane with ubiquinol-cytochrome c oxidoreductase (cytochrome b-c1 complex, complex III, CIII). Requires Cu cation as cofactor.

Its subcellular location is the mitochondrion inner membrane. It carries out the reaction 4 Fe(II)-[cytochrome c] + O2 + 8 H(+)(in) = 4 Fe(III)-[cytochrome c] + 2 H2O + 4 H(+)(out). Its function is as follows. Component of the cytochrome c oxidase, the last enzyme in the mitochondrial electron transport chain which drives oxidative phosphorylation. The respiratory chain contains 3 multisubunit complexes succinate dehydrogenase (complex II, CII), ubiquinol-cytochrome c oxidoreductase (cytochrome b-c1 complex, complex III, CIII) and cytochrome c oxidase (complex IV, CIV), that cooperate to transfer electrons derived from NADH and succinate to molecular oxygen, creating an electrochemical gradient over the inner membrane that drives transmembrane transport and the ATP synthase. Cytochrome c oxidase is the component of the respiratory chain that catalyzes the reduction of oxygen to water. Electrons originating from reduced cytochrome c in the intermembrane space (IMS) are transferred via the dinuclear copper A center (CU(A)) of subunit 2 and heme A of subunit 1 to the active site in subunit 1, a binuclear center (BNC) formed by heme A3 and copper B (CU(B)). The BNC reduces molecular oxygen to 2 water molecules using 4 electrons from cytochrome c in the IMS and 4 protons from the mitochondrial matrix. In Trypanosoma brucei brucei, this protein is Cytochrome c oxidase subunit 2 (COXII).